The sequence spans 211 residues: Large ribosomal subunit protein uL3 (211 aa).

At Gln-150 the chain carries N5-methylglutamine.

It belongs to the universal ribosomal protein uL3 family. In terms of assembly, part of the 50S ribosomal subunit. Forms a cluster with proteins L14 and L19. Post-translationally, methylated by PrmB.

In terms of biological role, one of the primary rRNA binding proteins, it binds directly near the 3'-end of the 23S rRNA, where it nucleates assembly of the 50S subunit. The protein is Large ribosomal subunit protein uL3 of Pseudomonas fluorescens (strain Pf0-1).